The sequence spans 494 residues: Probable malate:quinone oxidoreductase (494 aa).

The protein belongs to the MQO family. Requires FAD as cofactor.

The enzyme catalyses (S)-malate + a quinone = a quinol + oxaloacetate. It functions in the pathway carbohydrate metabolism; tricarboxylic acid cycle; oxaloacetate from (S)-malate (quinone route): step 1/1. The sequence is that of Probable malate:quinone oxidoreductase from Micrococcus luteus (strain ATCC 4698 / DSM 20030 / JCM 1464 / CCM 169 / CCUG 5858 / IAM 1056 / NBRC 3333 / NCIMB 9278 / NCTC 2665 / VKM Ac-2230) (Micrococcus lysodeikticus).